A 187-amino-acid polypeptide reads, in one-letter code: Hypoxanthine/guanine phosphoribosyltransferase (187 aa).

The protein belongs to the purine/pyrimidine phosphoribosyltransferase family. Archaeal HPRT subfamily. In terms of assembly, homodimer.

It is found in the cytoplasm. It catalyses the reaction IMP + diphosphate = hypoxanthine + 5-phospho-alpha-D-ribose 1-diphosphate. The enzyme catalyses GMP + diphosphate = guanine + 5-phospho-alpha-D-ribose 1-diphosphate. Its pathway is purine metabolism; IMP biosynthesis via salvage pathway; IMP from hypoxanthine: step 1/1. Its function is as follows. Catalyzes a salvage reaction resulting in the formation of IMP that is energically less costly than de novo synthesis. In Methanocorpusculum labreanum (strain ATCC 43576 / DSM 4855 / Z), this protein is Hypoxanthine/guanine phosphoribosyltransferase.